The primary structure comprises 57 residues: uncharacterized protein (57 aa).

The next 2 membrane-spanning stretches (helical) occupy residues 4-26 (VNIL…SELW) and 33-55 (ALGY…IAIL).

It localises to the cell membrane. This is an uncharacterized protein from Methanocaldococcus jannaschii (strain ATCC 43067 / DSM 2661 / JAL-1 / JCM 10045 / NBRC 100440) (Methanococcus jannaschii).